Here is a 1370-residue protein sequence, read N- to C-terminus: DNA-directed RNA polymerase subunit beta (1370 aa).

The protein belongs to the RNA polymerase beta chain family. In terms of assembly, the RNAP catalytic core consists of 2 alpha, 1 beta, 1 beta' and 1 omega subunit. When a sigma factor is associated with the core the holoenzyme is formed, which can initiate transcription.

The catalysed reaction is RNA(n) + a ribonucleoside 5'-triphosphate = RNA(n+1) + diphosphate. Functionally, DNA-dependent RNA polymerase catalyzes the transcription of DNA into RNA using the four ribonucleoside triphosphates as substrates. The chain is DNA-directed RNA polymerase subunit beta from Albidiferax ferrireducens (strain ATCC BAA-621 / DSM 15236 / T118) (Rhodoferax ferrireducens).